The following is a 171-amino-acid chain: Small ribosomal subunit protein uS5 (171 aa).

Residues 15 to 78 (YEEKVVKIKR…EKAKKQLIRI (64 aa)) form the S5 DRBM domain.

Belongs to the universal ribosomal protein uS5 family. Part of the 30S ribosomal subunit. Contacts proteins S4 and S8.

Functionally, with S4 and S12 plays an important role in translational accuracy. Located at the back of the 30S subunit body where it stabilizes the conformation of the head with respect to the body. The sequence is that of Small ribosomal subunit protein uS5 from Phytoplasma australiense.